The primary structure comprises 289 residues: Spore coat polysaccharide biosynthesis protein SpsD (289 aa).

The N-acetyltransferase domain maps to 137–289 (FELGPPEPGD…YHIWPGKEAK (153 aa)).

Its pathway is spore coat biogenesis; spore coat polysaccharide biosynthesis. In Bacillus subtilis (strain 168), this protein is Spore coat polysaccharide biosynthesis protein SpsD (spsD).